A 384-amino-acid chain; its full sequence is Dual specificity protein phosphatase 5 (384 aa).

One can recognise a Rhodanese domain in the interval 19-141; it reads AEARCVVLDC…FYSQYPECCV (123 aa). Positions 53-74 match the Nuclear localization signal motif; sequence RRARGGAVSARYVLADEAARAR. Positions 178–319 constitute a Tyrosine-protein phosphatase domain; the sequence is GPVEILPFLY…LLQYESEILP (142 aa). The active-site Phosphocysteine intermediate is the cysteine 263.

It belongs to the protein-tyrosine phosphatase family. Non-receptor class dual specificity subfamily.

The protein localises to the nucleus. It carries out the reaction O-phospho-L-tyrosyl-[protein] + H2O = L-tyrosyl-[protein] + phosphate. It catalyses the reaction O-phospho-L-seryl-[protein] + H2O = L-seryl-[protein] + phosphate. The catalysed reaction is O-phospho-L-threonyl-[protein] + H2O = L-threonyl-[protein] + phosphate. Dual specificity protein phosphatase; active with phosphotyrosine, phosphoserine and phosphothreonine residues. The highest relative activity is toward ERK1. The chain is Dual specificity protein phosphatase 5 (Dusp5) from Rattus norvegicus (Rat).